The sequence spans 415 residues: Gamma-glutamyl phosphate reductase (415 aa).

The protein belongs to the gamma-glutamyl phosphate reductase family.

The protein localises to the cytoplasm. It carries out the reaction L-glutamate 5-semialdehyde + phosphate + NADP(+) = L-glutamyl 5-phosphate + NADPH + H(+). The protein operates within amino-acid biosynthesis; L-proline biosynthesis; L-glutamate 5-semialdehyde from L-glutamate: step 2/2. Its function is as follows. Catalyzes the NADPH-dependent reduction of L-glutamate 5-phosphate into L-glutamate 5-semialdehyde and phosphate. The product spontaneously undergoes cyclization to form 1-pyrroline-5-carboxylate. The polypeptide is Gamma-glutamyl phosphate reductase (Thermotoga sp. (strain RQ2)).